Reading from the N-terminus, the 50-residue chain is uncharacterized protein (50 aa).

Residues 1 to 22 (MSKVAALGWGTLVYLGVGLLLA) form the signal peptide.

This is an uncharacterized protein from Dictyostelium discoideum (Social amoeba).